The chain runs to 224 residues: ATP synthase subunit a (224 aa).

6 helical membrane-spanning segments follow: residues Leu-17–Leu-37, Ile-72–Ile-92, Leu-99–Ile-119, Met-125–Ile-145, Gly-155–Leu-175, and Tyr-184–Val-204.

The protein belongs to the ATPase A chain family. As to quaternary structure, F-type ATPases have 2 components, CF(1) - the catalytic core - and CF(0) - the membrane proton channel. CF(1) has five subunits: alpha(3), beta(3), gamma(1), delta(1), epsilon(1). CF(0) has three main subunits: a, b and c.

The protein localises to the mitochondrion inner membrane. In terms of biological role, mitochondrial membrane ATP synthase (F(1)F(0) ATP synthase or Complex V) produces ATP from ADP in the presence of a proton gradient across the membrane which is generated by electron transport complexes of the respiratory chain. F-type ATPases consist of two structural domains, F(1) - containing the extramembraneous catalytic core and F(0) - containing the membrane proton channel, linked together by a central stalk and a peripheral stalk. During catalysis, ATP synthesis in the catalytic domain of F(1) is coupled via a rotary mechanism of the central stalk subunits to proton translocation. Key component of the proton channel; it may play a direct role in the translocation of protons across the membrane. The polypeptide is ATP synthase subunit a (mt:ATPase6) (Drosophila yakuba (Fruit fly)).